The primary structure comprises 183 residues: Large ribosomal subunit protein uL22 (183 aa).

The protein belongs to the universal ribosomal protein uL22 family.

This is Large ribosomal subunit protein uL22 (RPL17) from Podocoryna carnea (Hydrozoan).